The chain runs to 74 residues: Probable tetrachloroethene reductive dehalogenase membrane anchor protein (74 aa).

The next 2 membrane-spanning stretches (helical) occupy residues 11–31 (ALGLSLLYLALILVTFQISMG) and 40–60 (AGSILMVAGLIFSIIGVFLLM).

The protein belongs to the PceB family.

It localises to the cell inner membrane. Its function is as follows. May act as a membrane anchor for the tetrachloroethene reductive dehalogenase PceA. The polypeptide is Probable tetrachloroethene reductive dehalogenase membrane anchor protein (Sulfurospirillum multivorans (Dehalospirillum multivorans)).